Here is a 108-residue protein sequence, read N- to C-terminus: Protein Asterix (108 aa).

The tract at residues 1–29 (MNMTVDPRRKEKINRYKAPKNQGQSGGAN) is disordered. Residues 80–96 (VLSSFMLSVSAVVMSYL) traverse the membrane as a helical segment.

The protein belongs to the Asterix family.

It is found in the membrane. The chain is Protein Asterix from Drosophila melanogaster (Fruit fly).